The chain runs to 111 residues: Toxin 3FTx-Tri3 (111 aa).

An N-terminal signal peptide occupies residues Met-1–Ala-19. Positions Asp-20–Arg-34 are excised as a propeptide. Gln-35 carries the post-translational modification Pyrrolidone carboxylic acid. 4 disulfides stabilise this stretch: Cys-44–Cys-68, Cys-47–Cys-87, Cys-91–Cys-102, and Cys-103–Cys-108.

It belongs to the three-finger toxin family. Ancestral subfamily. Boigatoxin sub-subfamily. Expressed by the venom gland.

Its subcellular location is the secreted. In terms of biological role, potent postsynaptic neurotoxin. Displays readily reversible competitive antagonism at the nicotinic acetylcholine receptor (nAChR). The polypeptide is Toxin 3FTx-Tri3 (Trimorphodon biscutatus (Western lyre snake)).